Reading from the N-terminus, the 410-residue chain is Argininosuccinate synthase (410 aa).

10-18 (AYSGGLDTS) is a binding site for ATP. L-citrulline contacts are provided by Tyr-88 and Ser-93. An ATP-binding site is contributed by Gly-118. Residues Thr-120, Asn-124, and Asp-125 each coordinate L-aspartate. Asn-124 is a binding site for L-citrulline. L-citrulline-binding residues include Arg-128, Ser-177, Ser-186, Glu-262, and Tyr-274.

It belongs to the argininosuccinate synthase family. Type 1 subfamily. As to quaternary structure, homotetramer.

It is found in the cytoplasm. It catalyses the reaction L-citrulline + L-aspartate + ATP = 2-(N(omega)-L-arginino)succinate + AMP + diphosphate + H(+). It functions in the pathway amino-acid biosynthesis; L-arginine biosynthesis; L-arginine from L-ornithine and carbamoyl phosphate: step 2/3. The protein is Argininosuccinate synthase of Caldanaerobacter subterraneus subsp. tengcongensis (strain DSM 15242 / JCM 11007 / NBRC 100824 / MB4) (Thermoanaerobacter tengcongensis).